An 805-amino-acid chain; its full sequence is Polyribonucleotide nucleotidyltransferase (805 aa).

Mg(2+)-binding residues include aspartate 491 and aspartate 497. Positions 558–617 (PRMESMIIDKNKIKNVIGTGGKNVREICEKTGVKIEISQDGTVMIYAVSRDAVEEAKNMI) constitute a KH domain. The S1 motif domain occupies 627–694 (GKVFSGVISE…DKDHVQLSMR (68 aa)). Residues 702–805 (DLLEHESYSS…GGGNKKPRFF (104 aa)) form a disordered region.

It belongs to the polyribonucleotide nucleotidyltransferase family. Mg(2+) is required as a cofactor.

Its subcellular location is the cytoplasm. The enzyme catalyses RNA(n+1) + phosphate = RNA(n) + a ribonucleoside 5'-diphosphate. Functionally, involved in mRNA degradation. Catalyzes the phosphorolysis of single-stranded polyribonucleotides processively in the 3'- to 5'-direction. The polypeptide is Polyribonucleotide nucleotidyltransferase (Anaplasma marginale (strain Florida)).